Reading from the N-terminus, the 467-residue chain is Chromosomal replication initiator protein DnaA (467 aa).

The tract at residues Met1–Lys74 is domain I, interacts with DnaA modulators. The segment at Lys74–His130 is domain II. Residues Arg85–Thr127 are disordered. A compositionally biased stretch (polar residues) spans Pro112 to Thr127. The interval Arg131–Ala347 is domain III, AAA+ region. Residues Gly175, Gly177, Lys178, and Thr179 each coordinate ATP. A domain IV, binds dsDNA region spans residues Arg348–Gly467.

Belongs to the DnaA family. Oligomerizes as a right-handed, spiral filament on DNA at oriC.

It is found in the cytoplasm. Plays an essential role in the initiation and regulation of chromosomal replication. ATP-DnaA binds to the origin of replication (oriC) to initiate formation of the DNA replication initiation complex once per cell cycle. Binds the DnaA box (a 9 base pair repeat at the origin) and separates the double-stranded (ds)DNA. Forms a right-handed helical filament on oriC DNA; dsDNA binds to the exterior of the filament while single-stranded (ss)DNA is stabiized in the filament's interior. The ATP-DnaA-oriC complex binds and stabilizes one strand of the AT-rich DNA unwinding element (DUE), permitting loading of DNA polymerase. After initiation quickly degrades to an ADP-DnaA complex that is not apt for DNA replication. Binds acidic phospholipids. In Methylibium petroleiphilum (strain ATCC BAA-1232 / LMG 22953 / PM1), this protein is Chromosomal replication initiator protein DnaA.